Consider the following 328-residue polypeptide: Malate dehydrogenase (328 aa).

11 to 17 (GAAGQIG) is a binding site for NAD(+). Residues R94 and R100 each contribute to the substrate site. NAD(+) contacts are provided by residues N107, Q114, and 131-133 (VGN). 2 residues coordinate substrate: N133 and R164. H189 serves as the catalytic Proton acceptor.

This sequence belongs to the LDH/MDH superfamily. MDH type 2 family.

The catalysed reaction is (S)-malate + NAD(+) = oxaloacetate + NADH + H(+). Catalyzes the reversible oxidation of malate to oxaloacetate. This Stenotrophomonas maltophilia (strain R551-3) protein is Malate dehydrogenase.